The chain runs to 150 residues: Large ribosomal subunit protein uL13 (150 aa).

A disordered region spans residues 130 to 150; the sequence is EHPHSAQNPQVLSITTNELVK. Residues 134-150 show a composition bias toward polar residues; it reads SAQNPQVLSITTNELVK.

Belongs to the universal ribosomal protein uL13 family. Part of the 50S ribosomal subunit.

Functionally, this protein is one of the early assembly proteins of the 50S ribosomal subunit, although it is not seen to bind rRNA by itself. It is important during the early stages of 50S assembly. The chain is Large ribosomal subunit protein uL13 from Prochlorococcus marinus (strain SARG / CCMP1375 / SS120).